A 674-amino-acid polypeptide reads, in one-letter code: Sodium/hydrogen exchanger 1 (674 aa).

The N-terminal stretch at 1–24 is a signal peptide; sequence MKLNKSYILIVVLLLSLFYSSVSS. The segment at 31–65 is disordered; the sequence is KSNNHYNSDNSNNDNKNININNNNDGDGDDDDDNN. A compositionally biased stretch (low complexity) spans 37–55; it reads NSDNSNNDNKNININNNND. The next 12 membrane-spanning stretches (helical) occupy residues 120–140, 144–164, 175–195, 213–233, 275–297, 314–334, 336–356, 359–379, 401–421, 432–452, 460–480, and 499–519; these read TIIFIIMLILTGSVLIVYFII, IPFVPESVAVVTYGIILGIVF, VVSFEPENFFLFILPTIIFET, MFAVFGTIITFLVVGFGIYIV, LYILVLGESILNDATSMMLYSVV, VVAIGSVILGVVMALLLSLIL, WINIGKFPALETIFMVMFSYM, VLAGALDISGVLAVFFFGITL, TAAFISETFLFLYFGLSLTAH, WSILFTCLARAISVFPMCFLL, IPWVIQVAIWFAGLRGAFAFS, and NTLLVVVFTIFVFGMGTYPLL. The disordered stretch occupies residues 591–674; that stretch reads HELDSNPLRF…NKNNDTLPLI (84 aa). The segment covering 601-618 has biased composition (acidic residues); the sequence is DDDEEDDDDEDLDFDSDL. A compositionally biased stretch (low complexity) spans 627 to 657; that stretch reads DSIHQSDNNNNDNGNNNNNNNNIIINNNSQH. Polar residues predominate over residues 662–674; that stretch reads GSNNKNNDTLPLI.

It belongs to the monovalent cation:proton antiporter 1 (CPA1) transporter (TC 2.A.36) family.

The protein localises to the membrane. Its activity is regulated as follows. LY294002, an inhibitor of the catalytic subunit of PI3-kinase, blocks NHE1-dependent (but not NHE1-independent) increase in intracellular pH in response to cAMP. Its function is as follows. Regulation of intracellular pH homeostasis in response to cAMP, which is essential for chemotaxis. Necessary for F-actin localization and the kinetics of actin polymerization during chemotaxis and cell polarity but not for directional sensing. The chain is Sodium/hydrogen exchanger 1 (nhe1) from Dictyostelium discoideum (Social amoeba).